An 833-amino-acid chain; its full sequence is Leucine--tRNA ligase (833 aa).

The 'HIGH' region signature appears at 41–52 (PYPSGVGLHVGH). A 'KMSKS' region motif is present at residues 610–614 (KMSKS). Lysine 613 provides a ligand contact to ATP.

It belongs to the class-I aminoacyl-tRNA synthetase family.

The protein resides in the cytoplasm. It carries out the reaction tRNA(Leu) + L-leucine + ATP = L-leucyl-tRNA(Leu) + AMP + diphosphate. This Streptococcus pneumoniae serotype 2 (strain D39 / NCTC 7466) protein is Leucine--tRNA ligase.